Consider the following 249-residue polypeptide: Probable transcriptional regulatory protein A1S_1496 (249 aa).

Belongs to the TACO1 family.

The protein resides in the cytoplasm. The sequence is that of Probable transcriptional regulatory protein A1S_1496 from Acinetobacter baumannii (strain ATCC 17978 / DSM 105126 / CIP 53.77 / LMG 1025 / NCDC KC755 / 5377).